Consider the following 147-residue polypeptide: MAFKRINKELTDLGRDPPSSCSAGPVGEDLFHWQATIMGPGDSPYSGGVFFLAIHFPTDYPFKPPKVNFTTRIYHPNINSNGSICLDILRDQWSPALTISKVLLSICSMLTDPNPDEPLVPEIAHVYKTDRARYEATAREWTRKYAI.

Residues 1–147 enclose the UBC core domain; the sequence is MAFKRINKEL…AREWTRKYAI (147 aa). Cys107 acts as the Glycyl thioester intermediate in catalysis.

This sequence belongs to the ubiquitin-conjugating enzyme family.

The enzyme catalyses S-ubiquitinyl-[E1 ubiquitin-activating enzyme]-L-cysteine + [E2 ubiquitin-conjugating enzyme]-L-cysteine = [E1 ubiquitin-activating enzyme]-L-cysteine + S-ubiquitinyl-[E2 ubiquitin-conjugating enzyme]-L-cysteine.. It functions in the pathway protein modification; protein ubiquitination. In terms of biological role, catalyzes the covalent attachment of ubiquitin to other proteins. May also mediate selective proteolysis pathways. This is Ubiquitin-conjugating enzyme E2-16 kDa (UBC1) from Colletotrichum gloeosporioides (Anthracnose fungus).